We begin with the raw amino-acid sequence, 287 residues long: MPRILFTVPPFPVFIAAGEGVFKKGETHVKRVFSVFDLIYVKQGTLYITENETSFSVEGGEYILLSPGLEHYGTKGSDEATSYYWLHFDEHRYEFTAKGGSNWSELQQEKGSFEELARYGLALPRKGKVQRPQFMAQQFEKLIDYSAENSDLPLRKQILFEELMLHLQKEAFQIPSAKERVAWEAARYLQEHYKEKTTIKDLSLALHYHQDYVSRCMQQVLGVTPAQYTNRVRMTEAKRLLSSTNDKMGVIAETVGMEDPTYFSKLFKQIEGISPIEYRKIVSRKVQ.

The region spanning 183–281 (WEAARYLQEH…GISPIEYRKI (99 aa)) is the HTH araC/xylS-type domain. 2 consecutive DNA-binding regions (H-T-H motif) follow at residues 200-221 (KDLS…QQVL) and 248-271 (MGVI…KQIE).

This is an uncharacterized protein from Bacillus subtilis (strain 168).